The sequence spans 327 residues: Urokinase plasminogen activator surface receptor (327 aa).

A signal peptide spans 1–23 (MGLPRRLLLLLLLATTCVPASQG). 3 UPAR/Ly6 domains span residues 24 to 117 (LQCM…GRYL), 117 to 212 (LECA…PPNG), and 213 to 298 (FQCY…SPTG). Disulfide bonds link cysteine 26-cysteine 47, cysteine 29-cysteine 35, and cysteine 40-cysteine 68. Residue asparagine 32 is glycosylated (N-linked (GlcNAc...) asparagine). A glycan (N-linked (GlcNAc...) asparagine) is linked at asparagine 75. Disulfide bonds link cysteine 94/cysteine 99, cysteine 119/cysteine 146, cysteine 122/cysteine 129, cysteine 139/cysteine 168, cysteine 174/cysteine 191, cysteine 192/cysteine 197, cysteine 215/cysteine 243, cysteine 218/cysteine 226, cysteine 236/cysteine 262, cysteine 268/cysteine 287, and cysteine 288/cysteine 293. N-linked (GlcNAc...) asparagine glycans are attached at residues asparagine 183, asparagine 193, asparagine 221, asparagine 254, and asparagine 282. Residue glycine 298 is the site of GPI-anchor amidated glycine attachment. Positions 299 to 327 (GAPRPGPAQLSLIASLLLTLGLWGVLLWT) are cleaved as a propeptide — removed in mature form.

In terms of assembly, monomer. Interacts (via the UPAR/Ly6 domains) with SRPX2. Interacts with MRC2. Interacts with SORL1 (via N-terminal ectodomain); this interaction decreases PLAUR internalization. The ternary complex composed of PLAUR-PLAU-SERPINE1 also interacts with SORL1. Interacts with CD82; this interaction prevents PLAUR from binding to its high affinity ligand PLAU. In terms of tissue distribution, expressed in angiogenic endothelial cells (at protein level).

The protein resides in the cell membrane. It localises to the secreted. Acts as a receptor for urokinase plasminogen activator. Plays a role in localizing and promoting plasmin formation. Mediates the proteolysis-independent signal transduction activation effects of U-PA. The polypeptide is Urokinase plasminogen activator surface receptor (Plaur) (Mus musculus (Mouse)).